We begin with the raw amino-acid sequence, 1374 residues long: Protein Dicer (1374 aa).

The region spanning 19-206 (VYNIASKQNT…YHRLYQWEQL (188 aa)) is the Helicase ATP-binding domain. Residue 32-39 (MRTGAGKT) participates in ATP binding. Residues 145–148 (DECH) carry the DECH box motif. A Helicase C-terminal domain is found at 340–517 (DVTDKVFKLL…SLVCEERERV (178 aa)). Positions 537–628 (AVSLLYNFCN…KPLDFRRKIA (92 aa)) constitute a Dicer dsRNA-binding fold domain. 2 consecutive RNase III domains span residues 916-1038 (QALT…LDSG) and 1083-1233 (SSYI…LDSG). Mg(2+)-binding residues include Glu-1123, Asp-1219, and Glu-1222. The segment at 1263-1355 (EHKVYQLLKD…LLYSCNCKFS (93 aa)) is C-terminal dsRNA-binding fold. Zn(2+) contacts are provided by Cys-1275, His-1312, Cys-1350, and Cys-1352.

The protein belongs to the helicase family. Dicer subfamily. Mg(2+) serves as cofactor. The cofactor is Mn(2+).

It is found in the cytoplasm. The protein localises to the nucleus. Required for G1 arrest and mating in response to nitrogen starvation. Ago1 regulation of cytokinesis and cell cycle checkpoints occurs downstream of dcr1. Required, indirectly, for regulated hyperphosphorylation of cdc2. In terms of biological role, has a role in the RNA interference (RNAi) pathway which is important for heterochromatin formation, accurate chromosome segregation, centromere cohesion and telomere function during mitosis and meiosis. Digests double-stranded RNA (dsRNA) producing 21 to 23 bp dsRNAs, so-called interfering RNAs (siRNA). Required for both post-transcriptional and transcriptional gene silencing. Required for silencing at the centromeres and for initiation of transcriptionally silent heterochromatin at the mating type locus. Promotes histone H3 'Lys-10' methylation necessary for centromere function. Required for recruitment of swi6 and cohesin to an ectopic dg repeat. The protein is Protein Dicer (dcr1) of Schizosaccharomyces pombe (strain 972 / ATCC 24843) (Fission yeast).